The chain runs to 371 residues: 3-isopropylmalate dehydrogenase (371 aa).

77 to 90 (GPKWDDNPPHLRPE) provides a ligand contact to NAD(+). Positions 97, 107, 135, and 224 each coordinate substrate. Positions 224, 248, and 252 each coordinate Mg(2+). 282–294 (GSAPDIAGMNKAN) serves as a coordination point for NAD(+).

It belongs to the isocitrate and isopropylmalate dehydrogenases family. LeuB type 1 subfamily. Homodimer. It depends on Mg(2+) as a cofactor. Requires Mn(2+) as cofactor.

Its subcellular location is the cytoplasm. It catalyses the reaction (2R,3S)-3-isopropylmalate + NAD(+) = 4-methyl-2-oxopentanoate + CO2 + NADH. It functions in the pathway amino-acid biosynthesis; L-leucine biosynthesis; L-leucine from 3-methyl-2-oxobutanoate: step 3/4. In terms of biological role, catalyzes the oxidation of 3-carboxy-2-hydroxy-4-methylpentanoate (3-isopropylmalate) to 3-carboxy-4-methyl-2-oxopentanoate. The product decarboxylates to 4-methyl-2 oxopentanoate. This chain is 3-isopropylmalate dehydrogenase, found in Geobacillus kaustophilus (strain HTA426).